The chain runs to 303 residues: Mesenteric estrogen-dependent adipogenesis protein (303 aa).

Highly expressed in the visceral fat depot.

Its subcellular location is the cytoplasm. In terms of biological role, involved in processes that promote adipocyte differentiation, lipid accumulation, and glucose uptake in mature adipocytes. This chain is Mesenteric estrogen-dependent adipogenesis protein (MEDAG), found in Homo sapiens (Human).